We begin with the raw amino-acid sequence, 370 residues long: Cytochrome b (370 aa).

4 helical membrane-spanning segments follow: residues 25 to 45 (FGSM…FLAV), 69 to 90 (WLMQ…YIHI), 105 to 125 (WLSG…GYVL), and 170 to 190 (FFAL…LHIM). Positions 75 and 89 each coordinate heme b. Positions 174 and 188 each coordinate heme b. Residue His-193 participates in a ubiquinone binding. The next 4 membrane-spanning stretches (helical) occupy residues 218-238 (YKDL…VSFF), 280-300 (LGGA…PFTH), 312-332 (FMQL…WTAT), and 339-358 (FTTI…ISNP).

This sequence belongs to the cytochrome b family. The cytochrome bc1 complex contains 3 respiratory subunits (MT-CYB, CYC1 and UQCRFS1), 2 core proteins (UQCRC1 and UQCRC2) and probably 6 low-molecular weight proteins. Heme b is required as a cofactor.

Its subcellular location is the mitochondrion inner membrane. Component of the ubiquinol-cytochrome c reductase complex (complex III or cytochrome b-c1 complex) that is part of the mitochondrial respiratory chain. The b-c1 complex mediates electron transfer from ubiquinol to cytochrome c. Contributes to the generation of a proton gradient across the mitochondrial membrane that is then used for ATP synthesis. This Chilabothrus fordii (Ford's boa) protein is Cytochrome b (MT-CYB).